The sequence spans 397 residues: 3-ketoacyl-CoA thiolase, mitochondrial (397 aa).

The transit peptide at 1–16 directs the protein to the mitochondrion; not cleaved; it reads MALLRGVFIVAAKRTP. The residue at position 25 (lysine 25) is an N6-acetyllysine; alternate. Lysine 25 bears the N6-succinyllysine; alternate mark. Residue cysteine 92 is the Acyl-thioester intermediate of the active site. Threonine 119 bears the Phosphothreonine mark. A Phosphoserine modification is found at serine 121. Position 127 is a phosphotyrosine (tyrosine 127). Threonine 136 is modified (phosphothreonine). Lysine 137 bears the N6-acetyllysine; alternate mark. N6-succinyllysine; alternate is present on lysine 137. The residue at position 140 (serine 140) is a Phosphoserine. N6-acetyllysine; alternate occurs at positions 143, 171, 191, and 209. Lysine 143, lysine 171, lysine 191, and lysine 209 each carry N6-succinyllysine; alternate. Lysine 212 and lysine 214 each carry N6-succinyllysine. CoA contacts are provided by arginine 224 and threonine 227. Lysine 234 is modified (N6-acetyllysine; alternate). The residue at position 234 (lysine 234) is an N6-succinyllysine; alternate. Residue lysine 240 is modified to N6-succinyllysine. Position 241 is an N6-acetyllysine (lysine 241). Serine 251 is a binding site for CoA. Lysine 269 and lysine 270 each carry N6-acetyllysine. Residue lysine 305 is modified to N6-acetyllysine; alternate. Lysine 305 carries the N6-succinyllysine; alternate modification. Serine 310 bears the Phosphoserine mark. N6-acetyllysine; alternate is present on lysine 312. Lysine 312 carries the post-translational modification N6-succinyllysine; alternate. Serine 333 bears the Phosphoserine mark. 2 positions are modified to N6-acetyllysine: lysine 340 and lysine 375. Catalysis depends on cysteine 382, which acts as the Proton donor/acceptor.

Belongs to the thiolase-like superfamily. Thiolase family. As to quaternary structure, homotetramer. Interacts with BNIP3.

It localises to the mitochondrion. The catalysed reaction is an acyl-CoA + acetyl-CoA = a 3-oxoacyl-CoA + CoA. It catalyses the reaction 2 acetyl-CoA = acetoacetyl-CoA + CoA. It carries out the reaction acetyl-CoA + H2O = acetate + CoA + H(+). The enzyme catalyses propanoyl-CoA + H2O = propanoate + CoA + H(+). The catalysed reaction is butanoyl-CoA + H2O = butanoate + CoA + H(+). It catalyses the reaction hexanoyl-CoA + H2O = hexanoate + CoA + H(+). It carries out the reaction octanoyl-CoA + H2O = octanoate + CoA + H(+). The enzyme catalyses decanoyl-CoA + H2O = decanoate + CoA + H(+). The catalysed reaction is dodecanoyl-CoA + H2O = dodecanoate + CoA + H(+). It catalyses the reaction tetradecanoyl-CoA + H2O = tetradecanoate + CoA + H(+). It carries out the reaction hexadecanoyl-CoA + H2O = hexadecanoate + CoA + H(+). It participates in lipid metabolism; fatty acid beta-oxidation. In terms of biological role, in the production of energy from fats, this is one of the enzymes that catalyzes the last step of the mitochondrial beta-oxidation pathway, an aerobic process breaking down fatty acids into acetyl-CoA. Using free coenzyme A/CoA, catalyzes the thiolytic cleavage of medium- to long-chain unbranched 3-oxoacyl-CoAs into acetyl-CoA and a fatty acyl-CoA shortened by two carbon atoms. Also catalyzes the condensation of two acetyl-CoA molecules into acetoacetyl-CoA and could be involved in the production of ketone bodies. Also displays hydrolase activity on various fatty acyl-CoAs. Thereby, could be responsible for the production of acetate in a side reaction to beta-oxidation. Abolishes BNIP3-mediated apoptosis and mitochondrial damage. This chain is 3-ketoacyl-CoA thiolase, mitochondrial (ACAA2), found in Bos taurus (Bovine).